The chain runs to 531 residues: Zinc finger protein 703-B (531 aa).

Over residues 1–10 (MNCSPPGSCT) the composition is skewed to polar residues. 3 disordered regions span residues 1-28 (MNCS…ATLA), 88-249 (SQIG…VAPI), and 295-318 (VGNQ…LTGA). 2 stretches are compositionally biased toward low complexity: residues 19-28 (TPATPCATLA) and 113-122 (RSSSLKLGES). Positions 171–180 (SPSSRVSSPG) are enriched in polar residues. Positions 183 to 198 (CESKNNESQEKKEPEV) are enriched in basic and acidic residues. The span at 199–215 (NKSSLETSQANPTLTRA) shows a compositional bias: polar residues. The span at 216–227 (SISNSSAESSQS) shows a compositional bias: low complexity. The C2H2-type zinc finger occupies 404-432 (HICNWVSASGPCDKRFATSEELLAHLRTH).

It belongs to the Elbow/Noc family.

The protein resides in the nucleus. It localises to the cytoplasm. Transcriptional corepressor which does not bind directly to DNA and may regulate transcription through recruitment of histone deacetylases to gene promoters. Regulates cell adhesion, migration and proliferation. Involved in specification of the lateral neural plate border (NPB). May be required for segmental gene expression during hindbrain development. This chain is Zinc finger protein 703-B (znf703-b), found in Xenopus laevis (African clawed frog).